The primary structure comprises 179 residues: Ribulose bisphosphate carboxylase small subunit, chloroplastic 1/4 (179 aa).

A chloroplast-targeting transit peptide spans 1-58 (MAASSTMLSSVATAACAAPAQASMVAPFVGLKSTSAFPVTQKPATGLSTLPSNGGRVQ).

The protein belongs to the RuBisCO small chain family. In terms of assembly, heterohexadecamer of 8 large and 8 small subunits.

The protein resides in the plastid. Its subcellular location is the chloroplast. Functionally, ruBisCO catalyzes two reactions: the carboxylation of D-ribulose 1,5-bisphosphate, the primary event in carbon dioxide fixation, as well as the oxidative fragmentation of the pentose substrate. Both reactions occur simultaneously and in competition at the same active site. Although the small subunit is not catalytic it is essential for maximal activity. The polypeptide is Ribulose bisphosphate carboxylase small subunit, chloroplastic 1/4 (RBCS1) (Fritillaria agrestis (Stinkbells)).